Here is a 596-residue protein sequence, read N- to C-terminus: Probable protein phosphatase 2C 26 (596 aa).

The segment at Ser122–Phe154 is disordered. The 408-residue stretch at Leu177–Leu584 folds into the PPM-type phosphatase domain. Mn(2+) is bound by residues Asp212, Gly213, Asp512, and Asp575.

This sequence belongs to the PP2C family. Requires Mg(2+) as cofactor. Mn(2+) is required as a cofactor.

The enzyme catalyses O-phospho-L-seryl-[protein] + H2O = L-seryl-[protein] + phosphate. It catalyses the reaction O-phospho-L-threonyl-[protein] + H2O = L-threonyl-[protein] + phosphate. The chain is Probable protein phosphatase 2C 26 from Oryza sativa subsp. japonica (Rice).